A 166-amino-acid chain; its full sequence is Small ribosomal subunit protein uS5 (166 aa).

Residues 11 to 74 form the S5 DRBM domain; it reads LQEKLVQVNR…DQARRNMVKV (64 aa).

This sequence belongs to the universal ribosomal protein uS5 family. In terms of assembly, part of the 30S ribosomal subunit. Contacts proteins S4 and S8.

Functionally, with S4 and S12 plays an important role in translational accuracy. Located at the back of the 30S subunit body where it stabilizes the conformation of the head with respect to the body. The sequence is that of Small ribosomal subunit protein uS5 from Chromohalobacter salexigens (strain ATCC BAA-138 / DSM 3043 / CIP 106854 / NCIMB 13768 / 1H11).